Consider the following 714-residue polypeptide: Zinc finger matrin-type protein 1 (714 aa).

Residues 89-119 (NFCKPCGVVLQHESERISHFESEIHAQNVKF) form a Matrin-type 1 zinc finger. The interval 172–214 (HYVGKSHSPTQNQSLEEHDQVSPSTCSPKMDEPNTTPAPPPFL) is disordered. The segment at 230–254 (YVCHICSITFTSLHMFRSHMQGTEH) adopts a Matrin-type 2 zinc-finger fold. The segment covering 417-434 (RERVDSEHRQRPCEERFS) has biased composition (basic and acidic residues). Disordered regions lie at residues 417 to 469 (RERV…NDDF) and 571 to 714 (MPAS…ILGF). Polar residues-rich tracts occupy residues 437 to 446 (APQTYQQEYS) and 575 to 588 (LSLS…SSYN). Residues 609 to 619 (SHRRRRQKRKR) show a composition bias toward basic residues. 2 stretches are compositionally biased toward basic and acidic residues: residues 620–632 (HLEE…EKEQ) and 640–662 (SYQD…EDKA). Residues 669-678 (TKHRRKKRKH) show a composition bias toward basic residues.

Its subcellular location is the nucleus. In Mus musculus (Mouse), this protein is Zinc finger matrin-type protein 1 (Zmat1).